The sequence spans 264 residues: 3-methyl-2-oxobutanoate hydroxymethyltransferase (264 aa).

2 residues coordinate Mg(2+): aspartate 45 and aspartate 84. 3-methyl-2-oxobutanoate contacts are provided by residues 45–46, aspartate 84, and lysine 112; that span reads DS. Glutamate 114 provides a ligand contact to Mg(2+). The Proton acceptor role is filled by glutamate 181.

The protein belongs to the PanB family. In terms of assembly, homodecamer; pentamer of dimers. It depends on Mg(2+) as a cofactor.

The protein resides in the cytoplasm. It carries out the reaction 3-methyl-2-oxobutanoate + (6R)-5,10-methylene-5,6,7,8-tetrahydrofolate + H2O = 2-dehydropantoate + (6S)-5,6,7,8-tetrahydrofolate. It participates in cofactor biosynthesis; (R)-pantothenate biosynthesis; (R)-pantoate from 3-methyl-2-oxobutanoate: step 1/2. In terms of biological role, catalyzes the reversible reaction in which hydroxymethyl group from 5,10-methylenetetrahydrofolate is transferred onto alpha-ketoisovalerate to form ketopantoate. The polypeptide is 3-methyl-2-oxobutanoate hydroxymethyltransferase (Colwellia psychrerythraea (strain 34H / ATCC BAA-681) (Vibrio psychroerythus)).